Here is a 192-residue protein sequence, read N- to C-terminus: Orotate phosphoribosyltransferase (192 aa).

116–124 (EDIVTTGLS) is a 5-phospho-alpha-D-ribose 1-diphosphate binding site. Residues threonine 120 and arginine 148 each coordinate orotate.

This sequence belongs to the purine/pyrimidine phosphoribosyltransferase family. PyrE subfamily. In terms of assembly, homodimer. It depends on Mg(2+) as a cofactor.

The catalysed reaction is orotidine 5'-phosphate + diphosphate = orotate + 5-phospho-alpha-D-ribose 1-diphosphate. The protein operates within pyrimidine metabolism; UMP biosynthesis via de novo pathway; UMP from orotate: step 1/2. Its function is as follows. Catalyzes the transfer of a ribosyl phosphate group from 5-phosphoribose 1-diphosphate to orotate, leading to the formation of orotidine monophosphate (OMP). The sequence is that of Orotate phosphoribosyltransferase from Bartonella tribocorum (strain CIP 105476 / IBS 506).